Consider the following 513-residue polypeptide: Xylose import ATP-binding protein XylG (513 aa).

ABC transporter domains lie at 5-242 (LEMK…VGRE) and 259-505 (LRIE…LRSE). 37 to 44 (GENGSGKS) serves as a coordination point for ATP.

Belongs to the ABC transporter superfamily. Xylose importer (TC 3.A.1.2.4) family. In terms of assembly, the complex is composed of two ATP-binding proteins (XylG), two transmembrane proteins (XylH) and a solute-binding protein (XylF).

The protein localises to the cell inner membrane. The enzyme catalyses D-xylose(out) + ATP + H2O = D-xylose(in) + ADP + phosphate + H(+). Functionally, part of the ABC transporter complex XylFGH involved in xylose import. Responsible for energy coupling to the transport system. The polypeptide is Xylose import ATP-binding protein XylG (Shigella boydii serotype 4 (strain Sb227)).